A 67-amino-acid polypeptide reads, in one-letter code: Protein AaeX (67 aa).

Helical transmembrane passes span 3-23 and 39-59; these read LLPV…ELLI and GIYE…CCLF.

The protein belongs to the AaeX family.

The protein resides in the cell membrane. In Yersinia pseudotuberculosis serotype O:1b (strain IP 31758), this protein is Protein AaeX.